Consider the following 354-residue polypeptide: Mycothiol acetyltransferase (354 aa).

Polar residues predominate over residues 1–18 (MMVDNQTPDSSTLSTAST). The tract at residues 1–21 (MMVDNQTPDSSTLSTASTPVY) is disordered. N-acetyltransferase domains follow at residues 21 to 176 (YAEP…QTRE) and 191 to 354 (LRMR…EPAA). Glu-52 provides a ligand contact to 1D-myo-inositol 2-(L-cysteinylamino)-2-deoxy-alpha-D-glucopyranoside. 101-103 (AAV) serves as a coordination point for acetyl-CoA. 1D-myo-inositol 2-(L-cysteinylamino)-2-deoxy-alpha-D-glucopyranoside-binding residues include Glu-217, Lys-259, and Glu-274. Acetyl-CoA-binding positions include 278 to 280 (VGV) and 285 to 291 (QGGGLGR). Residue Tyr-318 participates in 1D-myo-inositol 2-(L-cysteinylamino)-2-deoxy-alpha-D-glucopyranoside binding.

Belongs to the acetyltransferase family. MshD subfamily. As to quaternary structure, monomer.

It carries out the reaction 1D-myo-inositol 2-(L-cysteinylamino)-2-deoxy-alpha-D-glucopyranoside + acetyl-CoA = mycothiol + CoA + H(+). Its function is as follows. Catalyzes the transfer of acetyl from acetyl-CoA to desacetylmycothiol (Cys-GlcN-Ins) to form mycothiol. The sequence is that of Mycothiol acetyltransferase from Rothia mucilaginosa (strain DY-18) (Stomatococcus mucilaginosus).